Consider the following 126-residue polypeptide: Aspartate 1-decarboxylase 1 (126 aa).

Ser-25 serves as the catalytic Schiff-base intermediate with substrate; via pyruvic acid. Ser-25 bears the Pyruvic acid (Ser) mark. Position 57 (Thr-57) interacts with substrate. The active-site Proton donor is Tyr-58. 73 to 75 (GSA) contacts substrate.

The protein belongs to the PanD family. As to quaternary structure, heterooctamer of four alpha and four beta subunits. Pyruvate serves as cofactor. Post-translationally, is synthesized initially as an inactive proenzyme, which is activated by self-cleavage at a specific serine bond to produce a beta-subunit with a hydroxyl group at its C-terminus and an alpha-subunit with a pyruvoyl group at its N-terminus.

Its subcellular location is the cytoplasm. The enzyme catalyses L-aspartate + H(+) = beta-alanine + CO2. It participates in cofactor biosynthesis; (R)-pantothenate biosynthesis; beta-alanine from L-aspartate: step 1/1. Its function is as follows. Catalyzes the pyruvoyl-dependent decarboxylation of aspartate to produce beta-alanine. The protein is Aspartate 1-decarboxylase 1 of Polaromonas sp. (strain JS666 / ATCC BAA-500).